Here is a 245-residue protein sequence, read N- to C-terminus: Phycocyanobilin:ferredoxin oxidoreductase (245 aa).

This sequence belongs to the HY2 family.

It catalyses the reaction (2R,3Z)-phycocyanobilin + 4 oxidized [2Fe-2S]-[ferredoxin] = biliverdin IXalpha + 4 reduced [2Fe-2S]-[ferredoxin] + 4 H(+). Catalyzes the four-electron reduction of biliverdin IX-alpha (2-electron reduction at both the A and D rings); the reaction proceeds via an isolatable 2-electron intermediate, 181,182-dihydrobiliverdin. The sequence is that of Phycocyanobilin:ferredoxin oxidoreductase (pcyA) from Nostoc punctiforme (strain ATCC 29133 / PCC 73102).